A 495-amino-acid polypeptide reads, in one-letter code: uncharacterized protein (495 aa).

The segment covering 305-317 (DYNNNNNENYSGS) has biased composition (low complexity). The tract at residues 305-404 (DYNNNNNENY…LDEEDNRKNK (100 aa)) is disordered. A compositionally biased stretch (acidic residues) spans 335-347 (YDNDENNDDENND). Residues 348 to 363 (ENNNNNNNNNNNNNNN) show a composition bias toward low complexity. A compositionally biased stretch (acidic residues) spans 386–398 (SDDDEADNELDEE).

This is an uncharacterized protein from Dictyostelium discoideum (Social amoeba).